Consider the following 129-residue polypeptide: Large ribosomal subunit protein eL31 (129 aa).

Residues 1–46 are disordered; that stretch reads MSQETTATKQEEQKTSELQQQKKEEQKPQQATTTTKEEKKTKPEKE. 2 stretches are compositionally biased toward basic and acidic residues: residues 9 to 27 and 35 to 46; these read KQEE…EEQK and TKEEKKTKPEKE.

This sequence belongs to the eukaryotic ribosomal protein eL31 family.

This Sulfolobus acidocaldarius (strain ATCC 33909 / DSM 639 / JCM 8929 / NBRC 15157 / NCIMB 11770) protein is Large ribosomal subunit protein eL31 (rpl31e).